We begin with the raw amino-acid sequence, 249 residues long: Adapter protein MecA (249 aa).

The protein belongs to the MecA family. Homodimer.

Its function is as follows. Enables the recognition and targeting of unfolded and aggregated proteins to the ClpC protease or to other proteins involved in proteolysis. The sequence is that of Adapter protein MecA from Streptococcus thermophilus (strain ATCC BAA-491 / LMD-9).